Consider the following 261-residue polypeptide: SLA class II histocompatibility antigen, DQ haplotype C beta chain (261 aa).

A signal peptide spans 1-31 (MSGMVALRLPRGLWTAALTVMLVVLGAPVAE). The beta-1 stretch occupies residues 32–126 (GRDSPQDFVF…IEEGTTLQRR (95 aa)). The Extracellular portion of the chain corresponds to 32–230 (GRDSPQDFVF…RAQSESAQSK (199 aa)). 2 disulfides stabilise this stretch: cysteine 47/cysteine 111 and cysteine 149/cysteine 205. Asparagine 51 is a glycosylation site (N-linked (GlcNAc...) asparagine). A beta-2 region spans residues 127 to 220 (VQPTVTISPS…SLQNPILVEW (94 aa)). The region spanning 129 to 233 (PTVTISPSKA…SESAQSKMLS (105 aa)) is the Ig-like C1-type domain. A connecting peptide region spans residues 221–230 (RAQSESAQSK). Residues 231-251 (MLSGVGGFVLGLIFLGLGLFI) form a helical membrane-spanning segment. Over 252-261 (RHRSQKGLVR) the chain is Cytoplasmic.

Belongs to the MHC class II family.

It localises to the membrane. In Sus scrofa (Pig), this protein is SLA class II histocompatibility antigen, DQ haplotype C beta chain.